The chain runs to 274 residues: MGHMVNANYQIDEFVNLGANSIETDVSFDSSANPEYTYHGVPCDCRRWCKKWEYFNNFLKALRKATTPGDSKYHEKLVLVVFDLKAGSLYDNQAYDAGKKLAKNLLQHYWNNGNNGGRAYIVLSIPNLAHYKLITGFKETLKTEGHPELMEKVGYDFSGNDSIDQVANAYKKAGVTGRVWQSDGITNCVASFIRGLDRAKKAVKNRDSSNGYINKVYYWTVDKYATTREALDIGVDGIMTNYPDVIANVLNESAYKEKFRLATYDDNPWETFKN.

Residue histidine 3 is part of the active site. 2 residues coordinate Mg(2+): glutamate 23 and aspartate 25. Histidine 39 acts as the Nucleophile in catalysis. 2 cysteine pairs are disulfide-bonded: cysteine 43–cysteine 49 and cysteine 45–cysteine 188. Aspartate 83 contributes to the Mg(2+) binding site. Residue asparagine 251 is glycosylated (N-linked (GlcNAc...) asparagine).

The protein belongs to the arthropod phospholipase D family. Class II subfamily. The cofactor is Mg(2+). In terms of tissue distribution, expressed by the venom gland.

It is found in the secreted. The enzyme catalyses an N-(acyl)-sphingosylphosphocholine = an N-(acyl)-sphingosyl-1,3-cyclic phosphate + choline. The catalysed reaction is an N-(acyl)-sphingosylphosphoethanolamine = an N-(acyl)-sphingosyl-1,3-cyclic phosphate + ethanolamine. It carries out the reaction a 1-acyl-sn-glycero-3-phosphocholine = a 1-acyl-sn-glycero-2,3-cyclic phosphate + choline. It catalyses the reaction a 1-acyl-sn-glycero-3-phosphoethanolamine = a 1-acyl-sn-glycero-2,3-cyclic phosphate + ethanolamine. Its function is as follows. Dermonecrotic toxins cleave the phosphodiester linkage between the phosphate and headgroup of certain phospholipids (sphingolipid and lysolipid substrates), forming an alcohol (often choline) and a cyclic phosphate. This toxin acts on sphingomyelin (SM). It may also act on ceramide phosphoethanolamine (CPE), lysophosphatidylcholine (LPC) and lysophosphatidylethanolamine (LPE), but not on lysophosphatidylserine (LPS), and lysophosphatidylglycerol (LPG). It acts by transphosphatidylation, releasing exclusively cyclic phosphate products as second products. Induces dermonecrosis, hemolysis, increased vascular permeability, edema, inflammatory response, and platelet aggregation. This chain is Dermonecrotic toxin LarSicTox-alphaIB2bii, found in Loxosceles arizonica (Arizona brown spider).